We begin with the raw amino-acid sequence, 354 residues long: UDP-3-O-acylglucosamine N-acyltransferase (354 aa).

Histidine 257 functions as the Proton acceptor in the catalytic mechanism. Residues 335–354 (AQQVSKSKLRGRNPGGKQND) are disordered.

It belongs to the transferase hexapeptide repeat family. LpxD subfamily. As to quaternary structure, homotrimer.

It catalyses the reaction a UDP-3-O-[(3R)-3-hydroxyacyl]-alpha-D-glucosamine + a (3R)-hydroxyacyl-[ACP] = a UDP-2-N,3-O-bis[(3R)-3-hydroxyacyl]-alpha-D-glucosamine + holo-[ACP] + H(+). It participates in bacterial outer membrane biogenesis; LPS lipid A biosynthesis. Its function is as follows. Catalyzes the N-acylation of UDP-3-O-acylglucosamine using 3-hydroxyacyl-ACP as the acyl donor. Is involved in the biosynthesis of lipid A, a phosphorylated glycolipid that anchors the lipopolysaccharide to the outer membrane of the cell. This chain is UDP-3-O-acylglucosamine N-acyltransferase, found in Rhizobium etli (strain ATCC 51251 / DSM 11541 / JCM 21823 / NBRC 15573 / CFN 42).